The sequence spans 597 residues: Elongation factor 4 (597 aa).

Residues 2–184 enclose the tr-type G domain; that stretch reads KHIRNFSIIA…EIVARIPAPV (183 aa). GTP-binding positions include 14–19 and 131–134; these read DHGKST and NKID.

It belongs to the TRAFAC class translation factor GTPase superfamily. Classic translation factor GTPase family. LepA subfamily.

The protein resides in the cell inner membrane. The catalysed reaction is GTP + H2O = GDP + phosphate + H(+). In terms of biological role, required for accurate and efficient protein synthesis under certain stress conditions. May act as a fidelity factor of the translation reaction, by catalyzing a one-codon backward translocation of tRNAs on improperly translocated ribosomes. Back-translocation proceeds from a post-translocation (POST) complex to a pre-translocation (PRE) complex, thus giving elongation factor G a second chance to translocate the tRNAs correctly. Binds to ribosomes in a GTP-dependent manner. The polypeptide is Elongation factor 4 (Aeromonas salmonicida (strain A449)).